Here is a 466-residue protein sequence, read N- to C-terminus: FERM domain-containing protein 8 (466 aa).

Met1 carries the N-acetylmethionine modification. The tract at residues 1–21 (MEGAEGNAGQPGPAERSHRSS) is disordered. Phosphoserine is present on Ser24. In terms of domain architecture, FERM spans 30-377 (ADVLVYLADD…YCIELSQAAE (348 aa)). A disordered region spans residues 379 to 409 (TLSQESASGPHEAPSPSPPPTQRPKLRRQGS). The residue at position 384 (Ser384) is a Phosphoserine. Positions 391 to 400 (APSPSPPPTQ) are enriched in pro residues. Residue Ser409 is modified to Phosphoserine. A Phosphothreonine modification is found at Thr420. Residues Ser440 and Ser447 each carry the phosphoserine modification. The segment covering 442-460 (FSRQLSSSQGSYTVVQPTD) has biased composition (polar residues). Positions 442-466 (FSRQLSSSQGSYTVVQPTDDSLEQS) are disordered.

As to quaternary structure, interacts with iRhom proteins, including iRhom2/RHBDF2 (via cytoplasmic N-termini); this interaction leads to mutual protein stabilization. Interacts with LRP6; this interaction affects LRP6-binding to AXIN1. As to expression, widely expressed (at protein level).

It is found in the cytoplasm. It localises to the cytosol. The protein resides in the cell membrane. In terms of biological role, promotes the cell surface stability of iRhom1/RHBDF1 and iRhom2/RHBDF2 and prevents their degradation via the endolysosomal pathway. By acting on iRhoms, involved in ADAM17-mediated shedding of TNF, amphiregulin/AREG, HBEGF and TGFA from the cell surface. Negatively regulates Wnt signaling, possibly by antagonizing the recruitment of AXIN1 to LRP6. The chain is FERM domain-containing protein 8 (Frmd8) from Mus musculus (Mouse).